A 185-amino-acid chain; its full sequence is NAD(P)H-dependent FAD/FMN reductase GTNG_3158 (185 aa).

As to quaternary structure, anthranilate 3-monooxygenase consists of a reductase component (GTNG_3158) and an oxygenase component HpaH.

It catalyses the reaction FADH2 + NAD(+) = FAD + NADH + 2 H(+). The catalysed reaction is FADH2 + NADP(+) = FAD + NADPH + 2 H(+). Functionally, involved in the pathway of tryptophan degradation. Reduces FAD/FMN to FADH(2)/FMNH(2), which are subsequently used for the hydroxylation of anthranilate. It can reduce either FAD or flavin mononucleotide (FMN) but prefers FAD. The enzyme has a slight preference for NADPH as acceptor. This Geobacillus thermodenitrificans (strain NG80-2) protein is NAD(P)H-dependent FAD/FMN reductase GTNG_3158.